The following is a 183-amino-acid chain: 2-C-methyl-D-erythritol 2,4-cyclodiphosphate synthase (183 aa).

Positions 8 and 10 each coordinate a divalent metal cation. Residues 8-10 (DVH) and 34-35 (HS) each bind 4-CDP-2-C-methyl-D-erythritol 2-phosphate. Histidine 42 contributes to the a divalent metal cation binding site. 4-CDP-2-C-methyl-D-erythritol 2-phosphate contacts are provided by residues 56-58 (DIG), 61-65 (FPDTD), 132-135 (TTEE), and phenylalanine 139.

This sequence belongs to the IspF family. In terms of assembly, homotrimer. A divalent metal cation serves as cofactor.

It catalyses the reaction 4-CDP-2-C-methyl-D-erythritol 2-phosphate = 2-C-methyl-D-erythritol 2,4-cyclic diphosphate + CMP. It functions in the pathway isoprenoid biosynthesis; isopentenyl diphosphate biosynthesis via DXP pathway; isopentenyl diphosphate from 1-deoxy-D-xylulose 5-phosphate: step 4/6. Involved in the biosynthesis of isopentenyl diphosphate (IPP) and dimethylallyl diphosphate (DMAPP), two major building blocks of isoprenoid compounds. Catalyzes the conversion of 4-diphosphocytidyl-2-C-methyl-D-erythritol 2-phosphate (CDP-ME2P) to 2-C-methyl-D-erythritol 2,4-cyclodiphosphate (ME-CPP) with a corresponding release of cytidine 5-monophosphate (CMP). The sequence is that of 2-C-methyl-D-erythritol 2,4-cyclodiphosphate synthase from Lachnospira eligens (strain ATCC 27750 / DSM 3376 / VPI C15-48 / C15-B4) (Eubacterium eligens).